We begin with the raw amino-acid sequence, 181 residues long: c-Myc-binding protein homolog (181 aa).

Residues 111–127 are compositionally biased toward low complexity; sequence ESTEAAEQQQQQQQQEN. Disordered regions lie at residues 111-145 and 159-181; these read ESTEAAEQQQQQQQQENGETELEKPNESSADVAEI and VVTTDEAAQPSPTVQAEASGSSE. Positions 168–181 are enriched in polar residues; it reads PSPTVQAEASGSSE.

This sequence belongs to the AMY1 family.

It is found in the nucleus. The chain is c-Myc-binding protein homolog from Drosophila melanogaster (Fruit fly).